Reading from the N-terminus, the 278-residue chain is 4-deoxy-L-threo-5-hexosulose-uronate ketol-isomerase (278 aa).

Positions 196, 198, 203, and 245 each coordinate Zn(2+).

The protein belongs to the KduI family. Homohexamer. The cofactor is Zn(2+).

It carries out the reaction 5-dehydro-4-deoxy-D-glucuronate = 3-deoxy-D-glycero-2,5-hexodiulosonate. It participates in glycan metabolism; pectin degradation; 2-dehydro-3-deoxy-D-gluconate from pectin: step 4/5. Its function is as follows. Catalyzes the isomerization of 5-dehydro-4-deoxy-D-glucuronate to 3-deoxy-D-glycero-2,5-hexodiulosonate. The chain is 4-deoxy-L-threo-5-hexosulose-uronate ketol-isomerase from Escherichia coli (strain SMS-3-5 / SECEC).